We begin with the raw amino-acid sequence, 424 residues long: MAKQIQAIRGMNDILPTQSPLWQKVEAVLRSSVSAYGYSEIRTPIVESTDLFKRSIGEVTDIVEKEMYTFEDRNSDSLTLRPEGTASTVRAGNEHGLLYNQEQRLWYMGPMFRHERPQKGRYRQFHQFGVEVYGIGTADIDAEVLMLSARLWQQLGIDEHVSLELNTLGDPSERAAYRDALIAFLEQHKDKLDEDSQRRMYSNPLRVLDTKDSQVQALLADAPALMDYLGEESKTHFSTLCELLDAVGIQYRVNPRLVRGLDYYNRTVFEWVTTSLGSQGTVLAGGRYDGLVGQLGGKDTPAVGFAMGLERIVLLLETLGLNQDIAPEVDVYVTAMGDSCLVEAFKVAQELRQALPGLKVMSHCGGGNVKKQMKRADKSGAAYAIIIGENELANNQVAIKPLRNNNQQELVARDALAETISALI.

This sequence belongs to the class-II aminoacyl-tRNA synthetase family. Homodimer.

Its subcellular location is the cytoplasm. The catalysed reaction is tRNA(His) + L-histidine + ATP = L-histidyl-tRNA(His) + AMP + diphosphate + H(+). The chain is Histidine--tRNA ligase from Shewanella denitrificans (strain OS217 / ATCC BAA-1090 / DSM 15013).